The following is a 438-amino-acid chain: MISFRFLLLSGLCALGISSYAETPKETTGHYHRYKARIQKKHPESIKESAPSETPHHNSLLSPVTNIFCSHPWKDGISVSNLLTSVEKATNTQISLDFSILPQWFYPHKALGQTQALEIPSWQFYFSPSTTWTLYDSPTAGQGIVDFSYTLIHYWQTNGVDANQAAGTASSMNDYSNRENNLAQLTFSQTFPGDFLTLAIGQYSLYAIDGTLYDNDQYSGFISYALSQNASATYSLGSTGAYLQFTPNSEIKVQLGFQDSYNIDGTNFSIYNLTKSKYNFYGYASWTPKPSCGDGQYSVLLYSTRKVPEQNSQVTGWSLNAAQHIHEKLYLFGRINGATGTALPINRSYVLGLVSENPLNRHSQDLLGIGFATNKVNAKAISNVNKLRRYESVMEAFATIGFGPYISLTPDFQLYIHPALRPERRTSQVYGLRANLSL.

The first 21 residues, 1–21, serve as a signal peptide directing secretion; it reads MISFRFLLLSGLCALGISSYA.

Belongs to the OprB family.

Its subcellular location is the cell outer membrane. In terms of biological role, facilitates L-arginine uptake, as part of the AaxABC system. The arginine uptake by the bacterium in the macrophage may be a virulence factor against the host innate immune response. This Chlamydia pneumoniae (Chlamydophila pneumoniae) protein is Porin AaxA (aaxA).